Reading from the N-terminus, the 359-residue chain is Tryptophan 2,3-dioxygenase (359 aa).

Residues 38-42 and Arg-109 each bind substrate; that span reads FIIVH. His-295 serves as a coordination point for heme. Position 309 (Thr-309) interacts with substrate.

It belongs to the tryptophan 2,3-dioxygenase family. As to quaternary structure, homotetramer. Requires heme as cofactor.

The enzyme catalyses L-tryptophan + O2 = N-formyl-L-kynurenine. The protein operates within amino-acid degradation; L-tryptophan degradation via kynurenine pathway; L-kynurenine from L-tryptophan: step 1/2. Functionally, heme-dependent dioxygenase that catalyzes the oxidative cleavage of the L-tryptophan (L-Trp) pyrrole ring and converts L-tryptophan to N-formyl-L-kynurenine. Catalyzes the oxidative cleavage of the indole moiety. This Bdellovibrio bacteriovorus (strain ATCC 15356 / DSM 50701 / NCIMB 9529 / HD100) protein is Tryptophan 2,3-dioxygenase.